The sequence spans 298 residues: Inosose dehydratase (298 aa).

This sequence belongs to the IolE/MocC family. Glutathione serves as cofactor. It depends on Co(2+) as a cofactor. Mn(2+) is required as a cofactor.

It carries out the reaction scyllo-inosose = 3D-3,5/4-trihydroxycyclohexane-1,2-dione + H2O. Catalyzes the dehydration of inosose (2-keto-myo-inositol, 2KMI or 2,4,6/3,5-pentahydroxycyclohexanone) to 3D-(3,5/4)-trihydroxycyclohexane-1,2-dione (D-2,3-diketo-4-deoxy-epi-inositol). The protein is Inosose dehydratase of Histophilus somni (strain 129Pt) (Haemophilus somnus).